A 592-amino-acid polypeptide reads, in one-letter code: RNA-binding protein 47 (592 aa).

Over residues 1–24 (MTAEDAAAAMSSDSAAGGAASAKA) the composition is skewed to low complexity. Residues 1-26 (MTAEDAAAAMSSDSAAGGAASAKAPE) are disordered. 3 RRM domains span residues 73-151 (CEVF…CSVD), 153-235 (CRLF…WAEP), and 248-320 (KILY…LAKP). An asymmetric dimethylarginine; alternate mark is found at Arg397 and Arg408. Arg397 and Arg408 each carry omega-N-methylarginine; alternate.

Belongs to the RRM RBM47 family. As to quaternary structure, homodimer. Interacts with A1CF. Interacts with APOBEC1; form an mRNA editing complex. Interacts with RBPMS.

The protein resides in the nucleus. Its subcellular location is the cytoplasm. Functionally, single-stranded RNA-binding protein that functions in a variety of RNA processes, including alternative splicing, RNA stabilization, and RNA editing. Functions as an enzyme-substrate adapter for the cytidine deaminase APOBEC1. With APOBEC1 forms an mRNA editing complex involved into cytidine to uridine editing of a variety of mRNA molecules. Through the binding of their 3'UTR, also stabilizes a variety of mRNAs and regulates the expression of genes such as the interferon alpha/beta receptor and interleukin-10. Also involved in the alternative splicing of several genes including TJP1. Binds the pre-mRNA (U)GCAUG consensus sequences in downstream intronic regions of alternative exons, regulating their exclusion and inclusion into mRNAs. Independently of its RNA-binding activity, could negatively regulate MAVS by promoting its lysosomal degradation. The sequence is that of RNA-binding protein 47 from Canis lupus familiaris (Dog).